We begin with the raw amino-acid sequence, 136 residues long: 2-hydroxyisobutanoyl-CoA mutase small subunit (136 aa).

The region spanning 5 to 133 is the B12-binding domain; sequence PIRVLLAKVG…DSIRSLVAAR (129 aa). His18 contributes to the adenosylcob(III)alamin binding site.

Belongs to the acyl-CoA mutase small subunit family. As to quaternary structure, homotetramer composed of two large substrate-binding subunits (HcmA) and two small cobalamin-binding subunits (HcmB). It depends on adenosylcob(III)alamin as a cofactor.

It catalyses the reaction 2-hydroxyisobutanoyl-CoA = (3S)-3-hydroxybutanoyl-CoA. Its function is as follows. Together with HcmA, catalyzes the isomerization of 2-hydroxyisobutyryl-CoA and 3-hydroxybutyryl-CoA. Is specific for 2-hydroxyisobutyryl-CoA and (S)-3-hydroxybutyryl-CoA, and shows only very low activity with (R)-3-hydroxybutyryl-CoA, isobutyryl-CoA and butyryl-CoA. In vitro, can isomerize pivalyl-CoA and isovaleryl-CoA, with much lower efficiency. Plays a central role in the degradation of substrates bearing a tert-butyl moiety, such as the fuel oxygenate methyl tert-butyl ether (MTBE) and its metabolites. This chain is 2-hydroxyisobutanoyl-CoA mutase small subunit, found in Aquincola tertiaricarbonis.